A 382-amino-acid chain; its full sequence is Mannitol-1-phosphate 5-dehydrogenase (382 aa).

3–14 (AVHFGAGNIGRG) contacts NAD(+).

This sequence belongs to the mannitol dehydrogenase family.

The enzyme catalyses D-mannitol 1-phosphate + NAD(+) = beta-D-fructose 6-phosphate + NADH + H(+). The sequence is that of Mannitol-1-phosphate 5-dehydrogenase from Aliivibrio salmonicida (strain LFI1238) (Vibrio salmonicida (strain LFI1238)).